A 342-amino-acid polypeptide reads, in one-letter code: Transcription initiation factor TFIID subunit 12 (342 aa).

The interval 1 to 221 (MKMEEFSPPT…QAPPPQMIPA (221 aa)) is disordered. Polar residues predominate over residues 12–35 (PNNHVIVQANPQIAAALSTNSPMQ). 4 stretches are compositionally biased toward low complexity: residues 39–59 (PPQGHQNPNEQQQQQQFVGQP), 67–89 (PMRMQMPQQQIRQMPYPSPQMRA), 96–146 (QQQQ…HLMG), and 180–192 (QQIMQVQHQQQHQ). Positions 193-218 (QPPPSQQIQQPPIPQPQQQQAPPPQM) are enriched in pro residues. The Histone-fold domain occupies 230–297 (EKSKLDDLMQ…EFILKNVYNM (68 aa)).

It belongs to the TAF12 family. As to quaternary structure, interacts (via histone-fold domain) with taf-4 (via the histone-fold domain). Interaction may facilitate the nuclear localization of taf-4.

The protein resides in the nucleus. In terms of biological role, part of the general transcription factor complex TFIID. Plays a role in recruiting taf-4 to the nucleus and thereby activating transcription initiation by RNA polymerase II, as part of the TFIID complex. This Caenorhabditis elegans protein is Transcription initiation factor TFIID subunit 12.